The sequence spans 304 residues: Acetyl-coenzyme A carboxylase carboxyl transferase subunit beta (304 aa).

The CoA carboxyltransferase N-terminal domain occupies valine 23 to valine 292. 4 residues coordinate Zn(2+): cysteine 27, cysteine 30, cysteine 46, and cysteine 49. The segment at cysteine 27–cysteine 49 adopts a C4-type zinc-finger fold. The segment at asparagine 284–alanine 304 is disordered. The span at proline 295–alanine 304 shows a compositional bias: pro residues.

It belongs to the AccD/PCCB family. In terms of assembly, acetyl-CoA carboxylase is a heterohexamer composed of biotin carboxyl carrier protein (AccB), biotin carboxylase (AccC) and two subunits each of ACCase subunit alpha (AccA) and ACCase subunit beta (AccD). Requires Zn(2+) as cofactor.

It is found in the cytoplasm. It carries out the reaction N(6)-carboxybiotinyl-L-lysyl-[protein] + acetyl-CoA = N(6)-biotinyl-L-lysyl-[protein] + malonyl-CoA. It functions in the pathway lipid metabolism; malonyl-CoA biosynthesis; malonyl-CoA from acetyl-CoA: step 1/1. Functionally, component of the acetyl coenzyme A carboxylase (ACC) complex. Biotin carboxylase (BC) catalyzes the carboxylation of biotin on its carrier protein (BCCP) and then the CO(2) group is transferred by the transcarboxylase to acetyl-CoA to form malonyl-CoA. The polypeptide is Acetyl-coenzyme A carboxylase carboxyl transferase subunit beta (Shigella boydii serotype 4 (strain Sb227)).